Here is a 1001-residue protein sequence, read N- to C-terminus: E3 ubiquitin-protein ligase etc-1 (1001 aa).

The 30-residue stretch at 28 to 57 (QEKAARKVQKFWRGHRVQHNQRLLFRAEFD) folds into the IQ domain. Residues 66–115 (LEETIKMAQLLVNFYETNKDEERLVMTLSELVKLKTSDKEFEKRIRETQR) are a coiled coil. An HECT domain is found at 658 to 1001 (KVNDLKSMVR…INSGAGFELA (344 aa)). Residue Cys-969 is the Glycyl thioester intermediate of the active site.

As to quaternary structure, interacts with ify-1 and cyb-1.

The catalysed reaction is S-ubiquitinyl-[E2 ubiquitin-conjugating enzyme]-L-cysteine + [acceptor protein]-L-lysine = [E2 ubiquitin-conjugating enzyme]-L-cysteine + N(6)-ubiquitinyl-[acceptor protein]-L-lysine.. It functions in the pathway protein modification; protein ubiquitination. Functionally, E3 ubiquitin-protein ligase that accepts ubiquitin from E2 ubiquitin-conjugating enzymes, such as ubc-18, in the form of a thioester and then directly transfers the ubiquitin to targeted substrates. Ubiquitinates ify-1 and cyb-1 targeting them for degradation in post-meiotic embryos. This is E3 ubiquitin-protein ligase etc-1 from Caenorhabditis elegans.